The primary structure comprises 517 residues: MAWFLCLSVLVVLVLALAALLWRVRTRDRPQEAPSLPYLPVLGSLLSLRSPHPPHVLFKELQQKYGQTYSLKMGSHQVIIVNHHAHAREVLLKRGRTFAGRPRTVTTDVLTRDGKDIAFGDYSATWRFHRKIVHGALCMFGEGSASLQRIICTEAQSLCSTLSEAAATGLALDLSPELTRAVTNVICSLCFNSSYSRGDPEFEAMLRYSQGIVDTVAKDSLVDIFPWLQIFPNKDLRLLKQCVAVRDQLLQKKFEEHKSDYSDHVQRDLLDALLRAKRSAENNNTAAEFSAEAVGLSDDHLLMTVGDIFGAGVETTTTVLKWAITYLIHYPEVQKQIQEELDRKVGVDRPPQLSDRGSLPFLEATIREVLRIRPVAPLLIPHVALSDTSLGDFTVRKGTRVVINLWSLHHDEKEWTNPDLFNPGRFLSADGSSLTLPSSSYLPFGAGLRVCLGEALAKMELFLFLSWILQRFTLSVPPSQSLPSLEGKFGVVLQPVKYAVKATPRPGCHSGLFPANP.

Residue Cys451 coordinates heme.

It belongs to the cytochrome P450 family. Heme is required as a cofactor.

It is found in the membrane. It catalyses the reaction a C21-steroid + reduced [NADPH--hemoprotein reductase] + O2 = a 17alpha-hydroxy-C21-steroid + oxidized [NADPH--hemoprotein reductase] + H2O + H(+). The enzyme catalyses 17alpha-hydroxyprogesterone + reduced [NADPH--hemoprotein reductase] + O2 = androst-4-ene-3,17-dione + acetate + oxidized [NADPH--hemoprotein reductase] + H2O + 2 H(+). It carries out the reaction 17alpha-hydroxypregnenolone + reduced [NADPH--hemoprotein reductase] + O2 = 3beta-hydroxyandrost-5-en-17-one + acetate + oxidized [NADPH--hemoprotein reductase] + H2O + 2 H(+). The protein operates within lipid metabolism; steroid biosynthesis. Functionally, conversion of pregnenolone and progesterone to their 17-alpha-hydroxylated products and subsequently to dehydroepiandrosterone (DHEA) and androstenedione. Catalyzes both the 17-alpha-hydroxylation and the 17,20-lyase reaction. This Oryzias latipes (Japanese rice fish) protein is Steroid 17-alpha-hydroxylase/17,20 lyase (cyp17a1).